The primary structure comprises 151 residues: Large ribosomal subunit protein bL17 (151 aa).

Positions 118–151 are disordered; that stretch reads EAKQPPRKEKAKKPAPVQAEEASATPASEEKAQD. Residues 131–144 are compositionally biased toward low complexity; the sequence is PAPVQAEEASATPA.

The protein belongs to the bacterial ribosomal protein bL17 family. In terms of assembly, part of the 50S ribosomal subunit. Contacts protein L32.

The chain is Large ribosomal subunit protein bL17 from Syntrophobacter fumaroxidans (strain DSM 10017 / MPOB).